Consider the following 87-residue polypeptide: DNA-directed RNA polymerase subunit omega (87 aa).

The protein belongs to the RNA polymerase subunit omega family. In terms of assembly, the RNAP catalytic core consists of 2 alpha, 1 beta, 1 beta' and 1 omega subunit. When a sigma factor is associated with the core the holoenzyme is formed, which can initiate transcription.

It carries out the reaction RNA(n) + a ribonucleoside 5'-triphosphate = RNA(n+1) + diphosphate. Promotes RNA polymerase assembly. Latches the N- and C-terminal regions of the beta' subunit thereby facilitating its interaction with the beta and alpha subunits. This chain is DNA-directed RNA polymerase subunit omega, found in Ectopseudomonas mendocina (strain ymp) (Pseudomonas mendocina).